We begin with the raw amino-acid sequence, 500 residues long: Probable malate:quinone oxidoreductase (500 aa).

It belongs to the MQO family. The cofactor is FAD.

It catalyses the reaction (S)-malate + a quinone = a quinol + oxaloacetate. Its pathway is carbohydrate metabolism; tricarboxylic acid cycle; oxaloacetate from (S)-malate (quinone route): step 1/1. The chain is Probable malate:quinone oxidoreductase from Halalkalibacterium halodurans (strain ATCC BAA-125 / DSM 18197 / FERM 7344 / JCM 9153 / C-125) (Bacillus halodurans).